The following is a 380-amino-acid chain: MDFNLNDEQELFVAGIRELMASENWEAYFAECDRDSVYPERFVKALADMGIDSLLIPEEHGGLEAGFVTVAAVWMELGRLGAPTYVLYQLPGGFNTFLREGTQEQIDKIMAFRGTGKQMWNSAITEPGAGSDVGSLKTTYTRKNGKVYLNGSKCFITSSAYTPYIVVMARDGASPDKPVYTEWFVDMSKAGIKVNKLEKLGLRMDSCCEITFDDVELDEKDMFGREGNGFNRVKEEFDHERFLVALTNYGTAMCTFEDAARYANQRVQFGEAIGRFQLIQEKFAHMAIKLNSMKNMLLEAAWKADNGTITSGDAAMCKYFCANAAFEVVDTAMQVLGGVGIAGNHRITRFWRDLRVDRVSGGSDEMQILTLGRAVLKQYR.

Belongs to the acyl-CoA dehydrogenase family. As to quaternary structure, homotetramer. It depends on FAD as a cofactor.

The protein localises to the cytoplasm. The catalysed reaction is 4-(trimethylamino)butanoyl-CoA + oxidized [electron-transfer flavoprotein] + H(+) = crotonobetainyl-CoA + reduced [electron-transfer flavoprotein]. The protein operates within amine and polyamine metabolism; carnitine metabolism. In terms of biological role, catalyzes the reduction of crotonobetainyl-CoA to gamma-butyrobetainyl-CoA. The sequence is that of Crotonobetainyl-CoA reductase from Salmonella typhi.